Consider the following 719-residue polypeptide: UvrABC system protein B (719 aa).

Positions 49-435 constitute a Helicase ATP-binding domain; the sequence is RRINAGERDV…TGGEFVEQVI (387 aa). Residue 62 to 69 participates in ATP binding; it reads GATGTGKS. Residues 115–138 carry the Beta-hairpin motif; the sequence is YYDYYQPEAYIAQTDTYIEKDSSI. The Helicase C-terminal domain maps to 453–606; the sequence is QIDDLIGEIR…QIAYNEANGI (154 aa). The disordered stretch occupies residues 635 to 654; it reads GGSGRNASRGRRAQGEPGRA. Residues 674-709 form the UVR domain; that stretch reads ADLIKDLTAQMMAAARDLQFELAARFRDEIADLKRE.

This sequence belongs to the UvrB family. In terms of assembly, forms a heterotetramer with UvrA during the search for lesions. Interacts with UvrC in an incision complex.

The protein resides in the cytoplasm. Its function is as follows. The UvrABC repair system catalyzes the recognition and processing of DNA lesions. A damage recognition complex composed of 2 UvrA and 2 UvrB subunits scans DNA for abnormalities. Upon binding of the UvrA(2)B(2) complex to a putative damaged site, the DNA wraps around one UvrB monomer. DNA wrap is dependent on ATP binding by UvrB and probably causes local melting of the DNA helix, facilitating insertion of UvrB beta-hairpin between the DNA strands. Then UvrB probes one DNA strand for the presence of a lesion. If a lesion is found the UvrA subunits dissociate and the UvrB-DNA preincision complex is formed. This complex is subsequently bound by UvrC and the second UvrB is released. If no lesion is found, the DNA wraps around the other UvrB subunit that will check the other stand for damage. This Mycobacterium tuberculosis (strain CDC 1551 / Oshkosh) protein is UvrABC system protein B.